The primary structure comprises 144 residues: Maximins 3/H11 type 1 (144 aa).

The first 18 residues, 1 to 18 (MNFKYIVAVSFLIASAYA), serve as a signal peptide directing secretion. Propeptides lie at residues 19–43 (RSVQ…REIR) and 73–122 (RTAE…KKEK). Position 143 is an isoleucine amide (Ile-143).

Belongs to the bombinin family. As to expression, expressed by the skin glands.

The protein resides in the secreted. In terms of biological role, maximin-3 shows antibacterial activity against both Gram-positive and Gram-negative bacteria. It also shows antimicrobial activity against the fungus C.albicans, but not against A.flavus nor P.uticale. It has little hemolytic activity. It possess a significant cytotoxicity against tumor cell lines. It possess a significant anti-HIV activity. It shows high spermicidal activity. Its function is as follows. Maximin-H11 shows antimicrobial activity against bacteria and against the fungus C.albicans. Shows strong hemolytic activity. In Bombina maxima (Giant fire-bellied toad), this protein is Maximins 3/H11 type 1.